A 352-amino-acid polypeptide reads, in one-letter code: Selenide, water dikinase (352 aa).

The active site involves Cys23. Residues Lys26 and 54–56 (SRD) contribute to the ATP site. Asp57 contacts Mg(2+). ATP-binding positions include Asp74, Asp97, and 145–147 (GHS). Asp97 serves as a coordination point for Mg(2+). Asp233 is a Mg(2+) binding site.

This sequence belongs to the selenophosphate synthase 1 family. Class I subfamily. As to quaternary structure, homodimer. The cofactor is Mg(2+).

The catalysed reaction is hydrogenselenide + ATP + H2O = selenophosphate + AMP + phosphate + 2 H(+). Its function is as follows. Synthesizes selenophosphate from selenide and ATP. The polypeptide is Selenide, water dikinase (Shewanella baltica (strain OS223)).